Consider the following 199-residue polypeptide: NAD(P)H dehydrogenase (quinone) 1 (199 aa).

A Flavodoxin-like domain is found at 4 to 190 (VLVLYYSAYG…EAARFQGAHV (187 aa)). FMN-binding positions include 10-15 (SAYGHI) and 78-80 (TRY). Tyrosine 12 is a binding site for NAD(+). Position 98 (tryptophan 98) interacts with substrate. FMN-binding positions include 113–119 (SSATQHG) and histidine 134.

Belongs to the WrbA family. FMN serves as cofactor.

It catalyses the reaction a quinone + NADH + H(+) = a quinol + NAD(+). The enzyme catalyses a quinone + NADPH + H(+) = a quinol + NADP(+). This Rhizobium meliloti (strain 1021) (Ensifer meliloti) protein is NAD(P)H dehydrogenase (quinone) 1.